The primary structure comprises 378 residues: Erythronate-4-phosphate dehydrogenase (378 aa).

Substrate-binding residues include Ser-45 and Thr-66. NAD(+) is bound by residues Asp-146 and Thr-175. Residue Arg-208 is part of the active site. Residue Asp-232 coordinates NAD(+). The active site involves Glu-237. The active-site Proton donor is His-254. Position 257 (Gly-257) interacts with NAD(+). Tyr-258 contacts substrate.

Belongs to the D-isomer specific 2-hydroxyacid dehydrogenase family. PdxB subfamily. As to quaternary structure, homodimer.

Its subcellular location is the cytoplasm. It carries out the reaction 4-phospho-D-erythronate + NAD(+) = (R)-3-hydroxy-2-oxo-4-phosphooxybutanoate + NADH + H(+). It functions in the pathway cofactor biosynthesis; pyridoxine 5'-phosphate biosynthesis; pyridoxine 5'-phosphate from D-erythrose 4-phosphate: step 2/5. Functionally, catalyzes the oxidation of erythronate-4-phosphate to 3-hydroxy-2-oxo-4-phosphonooxybutanoate. The chain is Erythronate-4-phosphate dehydrogenase from Escherichia coli O17:K52:H18 (strain UMN026 / ExPEC).